The sequence spans 1123 residues: Ubiquitin carboxyl-terminal hydrolase 43 (1123 aa).

The segment at 1–102 (MDLGPGDAAG…DGARPPGAQG (102 aa)) is disordered. Residues 17–28 (RPRRRRSLRRLF) are compositionally biased toward basic residues. Residues 29–39 (SRFLLALGSRS) show a composition bias toward low complexity. The region spanning 101 to 710 (QGLKNHGNTC…GAYILFYQKR (610 aa)) is the USP domain. Cysteine 110 acts as the Nucleophile in catalysis. Positions 202-221 (EGSSRGPVSEKLPPEATKTS) are disordered. Residue histidine 668 is the Proton acceptor of the active site. At arginine 746 the chain carries Asymmetric dimethylarginine. 4 disordered regions span residues 795-826 (ISMK…EKPP), 854-886 (TGTA…IERG), 959-1049 (FQMG…RIPE), and 1068-1099 (SSLR…QASY). Serine 969 is modified (phosphoserine). Basic and acidic residues predominate over residues 979–990 (KDSRRGTSELDR). Positions 1016–1027 (VSPQVPPVSLVS) are enriched in low complexity. Phosphoserine is present on serine 1041.

This sequence belongs to the peptidase C19 family. Expressed in brain, aorta and lung at low levels.

It carries out the reaction Thiol-dependent hydrolysis of ester, thioester, amide, peptide and isopeptide bonds formed by the C-terminal Gly of ubiquitin (a 76-residue protein attached to proteins as an intracellular targeting signal).. Its function is as follows. May recognize and hydrolyze the peptide bond at the C-terminal Gly of ubiquitin. Involved in the processing of poly-ubiquitin precursors as well as that of ubiquitinated proteins. The polypeptide is Ubiquitin carboxyl-terminal hydrolase 43 (USP43) (Homo sapiens (Human)).